The sequence spans 218 residues: Small ribosomal subunit protein uS3c (218 aa).

One can recognise a KH type-2 domain in the interval 43 to 118 (IKNYVQKNTK…KFNIAITKIA (76 aa)).

Belongs to the universal ribosomal protein uS3 family. As to quaternary structure, part of the 30S ribosomal subunit.

It is found in the plastid. It localises to the chloroplast. The sequence is that of Small ribosomal subunit protein uS3c (rps3) from Coffea arabica (Arabian coffee).